The chain runs to 198 residues: Dynactin subunit 5 (198 aa).

A compositionally biased stretch (polar residues) spans 179–188 (NTPASKGLPS). The segment at 179–198 (NTPASKGLPSTPTKLQTTTT) is disordered. The span at 189–198 (TPTKLQTTTT) shows a compositional bias: low complexity.

The protein belongs to the dynactin subunits 5/6 family. Dynactin subunit 5 subfamily. In terms of assembly, member of the pointed-end complex of the dynactin shoulder complex.

It localises to the cytoplasm. The protein localises to the cytoskeleton. In Dictyostelium discoideum (Social amoeba), this protein is Dynactin subunit 5 (dynE).